A 251-amino-acid polypeptide reads, in one-letter code: Ubiquinone/menaquinone biosynthesis C-methyltransferase UbiE (251 aa).

Residues Thr74, Asp95, and 123-124 (NA) contribute to the S-adenosyl-L-methionine site.

This sequence belongs to the class I-like SAM-binding methyltransferase superfamily. MenG/UbiE family.

It catalyses the reaction a 2-demethylmenaquinol + S-adenosyl-L-methionine = a menaquinol + S-adenosyl-L-homocysteine + H(+). The enzyme catalyses a 2-methoxy-6-(all-trans-polyprenyl)benzene-1,4-diol + S-adenosyl-L-methionine = a 5-methoxy-2-methyl-3-(all-trans-polyprenyl)benzene-1,4-diol + S-adenosyl-L-homocysteine + H(+). It participates in quinol/quinone metabolism; menaquinone biosynthesis; menaquinol from 1,4-dihydroxy-2-naphthoate: step 2/2. It functions in the pathway cofactor biosynthesis; ubiquinone biosynthesis. Functionally, methyltransferase required for the conversion of demethylmenaquinol (DMKH2) to menaquinol (MKH2) and the conversion of 2-polyprenyl-6-methoxy-1,4-benzoquinol (DDMQH2) to 2-polyprenyl-3-methyl-6-methoxy-1,4-benzoquinol (DMQH2). The polypeptide is Ubiquinone/menaquinone biosynthesis C-methyltransferase UbiE (Shewanella halifaxensis (strain HAW-EB4)).